The primary structure comprises 448 residues: Trigger factor (448 aa).

Residues 162–243 (GDFVQIDLNA…VRTVKEKELP (82 aa)) form the PPIase FKBP-type domain.

It belongs to the FKBP-type PPIase family. Tig subfamily.

It localises to the cytoplasm. It carries out the reaction [protein]-peptidylproline (omega=180) = [protein]-peptidylproline (omega=0). Involved in protein export. Acts as a chaperone by maintaining the newly synthesized protein in an open conformation. Functions as a peptidyl-prolyl cis-trans isomerase. In Salinispora arenicola (strain CNS-205), this protein is Trigger factor.